We begin with the raw amino-acid sequence, 89 residues long: Cytochrome b-c1 complex subunit 6, mitochondrial (89 aa).

Residues 1 to 13 constitute a mitochondrion transit peptide; that stretch reads MGLEDERKMLTGS. The segment at 1 to 27 is disordered; it reads MGLEDERKMLTGSGDPKEEEEEELVDP. Intrachain disulfides connect cysteine 35/cysteine 79 and cysteine 51/cysteine 65. Lysine 40 bears the N6-acetyllysine mark. At lysine 83 the chain carries N6-acetyllysine.

This sequence belongs to the UQCRH/QCR6 family. In terms of assembly, component of the ubiquinol-cytochrome c oxidoreductase (cytochrome b-c1 complex, complex III, CIII), a multisubunit enzyme composed of 11 subunits. The complex is composed of 3 respiratory subunits cytochrome b, cytochrome c1 and Rieske protein UQCRFS1, 2 core protein subunits UQCRC1/QCR1 and UQCRC2/QCR2, and 6 low-molecular weight protein subunits UQCRH/QCR6, UQCRB/QCR7, UQCRQ/QCR8, UQCR10/QCR9, UQCR11/QCR10 and subunit 9, the cleavage product of Rieske protein UQCRFS1. The complex exists as an obligatory dimer and forms supercomplexes (SCs) in the inner mitochondrial membrane with NADH-ubiquinone oxidoreductase (complex I, CI) and cytochrome c oxidase (complex IV, CIV), resulting in different assemblies (supercomplex SCI(1)III(2)IV(1) and megacomplex MCI(2)III(2)IV(2)).

It is found in the mitochondrion inner membrane. Its function is as follows. Component of the ubiquinol-cytochrome c oxidoreductase, a multisubunit transmembrane complex that is part of the mitochondrial electron transport chain which drives oxidative phosphorylation. The respiratory chain contains 3 multisubunit complexes succinate dehydrogenase (complex II, CII), ubiquinol-cytochrome c oxidoreductase (cytochrome b-c1 complex, complex III, CIII) and cytochrome c oxidase (complex IV, CIV), that cooperate to transfer electrons derived from NADH and succinate to molecular oxygen, creating an electrochemical gradient over the inner membrane that drives transmembrane transport and the ATP synthase. The cytochrome b-c1 complex catalyzes electron transfer from ubiquinol to cytochrome c, linking this redox reaction to translocation of protons across the mitochondrial inner membrane, with protons being carried across the membrane as hydrogens on the quinol. In the process called Q cycle, 2 protons are consumed from the matrix, 4 protons are released into the intermembrane space and 2 electrons are passed to cytochrome c. The sequence is that of Cytochrome b-c1 complex subunit 6, mitochondrial (Uqcrh) from Rattus norvegicus (Rat).